Reading from the N-terminus, the 244-residue chain is Venom nerve growth factor 1 (244 aa).

A signal peptide spans 1–18 (MSMLCYTLIIAFLIGIWA). Positions 19–125 (APKSEDNVPL…TLNRNIRAKR (107 aa)) are excised as a propeptide. Basic and acidic residues predominate over residues 47–66 (GLKTSRNTDQRHPAPKKAED). The segment at 47–67 (GLKTSRNTDQRHPAPKKAEDQ) is disordered. 3 disulfides stabilise this stretch: Cys-139-Cys-205, Cys-181-Cys-233, and Cys-193-Cys-235.

This sequence belongs to the NGF-beta family. Homodimer; non-covalently linked. In terms of tissue distribution, expressed by the venom gland.

It localises to the secreted. Functionally, nerve growth factor is important for the development and maintenance of the sympathetic and sensory nervous systems. It stimulates division and differentiation of sympathetic and embryonic sensory neurons as well as basal forebrain cholinergic neurons in the brain. Its relevance in the snake venom is not clear. However, it has been shown to inhibit metalloproteinase-dependent proteolysis of platelet glycoprotein Ib alpha, suggesting a metalloproteinase inhibition to prevent metalloprotease autodigestion and/or protection against prey proteases. Binds a lipid between the two protein chains in the homodimer. The lipid-bound form promotes histamine relase from mouse mast cells, contrary to the lipid-free form. This is Venom nerve growth factor 1 from Notechis scutatus scutatus (Mainland tiger snake).